The chain runs to 127 residues: Large ribosomal subunit protein bL12 (127 aa).

It belongs to the bacterial ribosomal protein bL12 family. In terms of assembly, homodimer. Part of the ribosomal stalk of the 50S ribosomal subunit. Forms a multimeric L10(L12)X complex, where L10 forms an elongated spine to which 2 to 4 L12 dimers bind in a sequential fashion. Binds GTP-bound translation factors.

Forms part of the ribosomal stalk which helps the ribosome interact with GTP-bound translation factors. Is thus essential for accurate translation. In Streptococcus thermophilus (strain CNRZ 1066), this protein is Large ribosomal subunit protein bL12.